Reading from the N-terminus, the 440-residue chain is MTSIYHILDRVPAIYKQDMEIEYEHLAMQLIKSGKLRIDTDDCCNFARFTEPALNISLMVSQEELTSPHLIPETTKLFQNLYKNSASDQKIKSIFDNLKKQIQKLQPVKKEVTEMLARIFVQSAHPIVIRWLLLNKTEVFLTYSHNIGDMMDMVSWQRVGGNSGMQSTNGKDVAIFVSCGGNPFAENNKDHPTYGNGFAAAARLQIIAAQELGHFADIKRDDKGRQITRHSANFSGTKATDKVRIARKNDIIHCHNLLSKLLKAGMKKQLDYETKLKFYNANKVSGLKVYAIKFMIFIYKFQLLNYSSRNNLIFVRKFKTDEYMALMIDAMFKDMQANLSPAADVYKNKNPEIEEAIACIEALARVPQQTVKWGYLTTKETMHDLYKIYYNEVIPSLITSYNAITGENYQRDFKKPKSNFFSKINIFSNKKLVLKPVREL.

This is an uncharacterized protein from Rickettsia conorii (strain ATCC VR-613 / Malish 7).